The chain runs to 163 residues: 6,7-dimethyl-8-ribityllumazine synthase (163 aa).

5-amino-6-(D-ribitylamino)uracil-binding positions include Phe27, Ala58–Glu60, and Cys87–Val89. Residue Asp92–Thr93 participates in (2S)-2-hydroxy-3-oxobutyl phosphate binding. The active-site Proton donor is the His95. Position 120 (Asn120) interacts with 5-amino-6-(D-ribitylamino)uracil. Arg134 lines the (2S)-2-hydroxy-3-oxobutyl phosphate pocket.

This sequence belongs to the DMRL synthase family.

It carries out the reaction (2S)-2-hydroxy-3-oxobutyl phosphate + 5-amino-6-(D-ribitylamino)uracil = 6,7-dimethyl-8-(1-D-ribityl)lumazine + phosphate + 2 H2O + H(+). The protein operates within cofactor biosynthesis; riboflavin biosynthesis; riboflavin from 2-hydroxy-3-oxobutyl phosphate and 5-amino-6-(D-ribitylamino)uracil: step 1/2. In terms of biological role, catalyzes the formation of 6,7-dimethyl-8-ribityllumazine by condensation of 5-amino-6-(D-ribitylamino)uracil with 3,4-dihydroxy-2-butanone 4-phosphate. This is the penultimate step in the biosynthesis of riboflavin. This chain is 6,7-dimethyl-8-ribityllumazine synthase, found in Nitrobacter winogradskyi (strain ATCC 25391 / DSM 10237 / CIP 104748 / NCIMB 11846 / Nb-255).